A 356-amino-acid chain; its full sequence is MLVLGIESSCDETGVALVDTSASPTPCLLAHALYSQIAMHQPYGGVVPELASRDHIRRVLPLTQDVMKSAQHTLADVDVIAYTRGPGLAGALLVGAGVACSLAAALGKPAMGVHHLEGHLLSPFLSADPPEFPFVALLVSGGHTQLMRVDRVGSYELLGETIDDAAGEAFDKSAKLMGMPYPGGPHLARLALGGDGAAFKLPRPLLHSGNLDFSFAGLKTAVLTQAKKLGTELESRKADLAASTQAAIVEVLVKKTLAALSQTALKRLVVAGGVGANALLRSQLNAACQQRGIRVHYPELEFCTDNGAMIAMAAGMRLQAGLVNLDALRGSYTFDVKPRWNLSEFQSEPALATQNA.

Fe cation contacts are provided by His115 and His119. Residues 138–142, Asp171, Gly184, and Asn277 contribute to the substrate site; that span reads LVSGG. Asp305 contributes to the Fe cation binding site.

The protein belongs to the KAE1 / TsaD family. Requires Fe(2+) as cofactor.

It is found in the cytoplasm. The catalysed reaction is L-threonylcarbamoyladenylate + adenosine(37) in tRNA = N(6)-L-threonylcarbamoyladenosine(37) in tRNA + AMP + H(+). Required for the formation of a threonylcarbamoyl group on adenosine at position 37 (t(6)A37) in tRNAs that read codons beginning with adenine. Is involved in the transfer of the threonylcarbamoyl moiety of threonylcarbamoyl-AMP (TC-AMP) to the N6 group of A37, together with TsaE and TsaB. TsaD likely plays a direct catalytic role in this reaction. This is tRNA N6-adenosine threonylcarbamoyltransferase from Polaromonas naphthalenivorans (strain CJ2).